A 1284-amino-acid polypeptide reads, in one-letter code: DNA topoisomerase 2, mitochondrial (1284 aa).

The transit peptide at 1–35 (MSKLLNNNNHKNLTNYLKFGKGIINNLNNKSKQVG) directs the protein to the mitochondrion. ATP contacts are provided by residues N183, N212, 240–242 (GSN), and 253–260 (GRNGFGAK). Residues 445–447 (KKK) are interaction with DNA. An ATP-binding site is contributed by 478 to 480 (QSK). In terms of domain architecture, Toprim spans 560-677 (CTLIITEGDS…NLLKRGFLVE (118 aa)). Residues E566, D646, and D648 each contribute to the Mg(2+) site. In terms of domain architecture, Topo IIA-type catalytic spans 810-1232 (IPSLIDGLKP…DPKSLWTADL (423 aa)). The O-(5'-phospho-DNA)-tyrosine intermediate role is filled by Y900. Positions 1245-1284 (EFQKKPLKTSSSSSFDVSSSSESAKLSSTRKSKTDKIKSK) are disordered. Residues 1254 to 1271 (SSSSSFDVSSSSESAKLS) show a composition bias toward low complexity.

It belongs to the type II topoisomerase family. As to quaternary structure, homodimer. It depends on Mg(2+) as a cofactor. Mn(2+) serves as cofactor. Requires Ca(2+) as cofactor.

It is found in the mitochondrion. It carries out the reaction ATP-dependent breakage, passage and rejoining of double-stranded DNA.. In terms of biological role, control of topological states of DNA by transient breakage and subsequent rejoining of DNA strands. Topoisomerase II makes double-strand breaks. This chain is DNA topoisomerase 2, mitochondrial (top2mt), found in Dictyostelium discoideum (Social amoeba).